We begin with the raw amino-acid sequence, 496 residues long: MSAEGEWSCDANDAVQITIVHPDQQKPKTLSSFHPQFTYPIFGEEERIFGYKGLIIRLRFAAHNLRPHVHVSYDEKFTAVDDAEPVDIIGALKEFLPEEAFSSLPEFESAVQEEDAKEFVPPGKLSHSYSIRGRNYEIWAASLADPQVQLLLNRFQIMVSFYIEAGTPLSTDDPEWTLDRWTVYFVLTAARYEKVEPPTPTASSYSIVGYATTYRWWFYKRDRSENPMPRDGPFPPPELVRPGELPSRLRIAQFLILPPHQGTGHGVNLYNTIHKTCLDDPTIMELTVEDPNESFDVLRDSADYHILRPEFLKHNIQINPDPWSDFSKKTKRVPTSSLLPLKTLNEIRTAYKIEPTQFAHIQEMFLLGQIPLKNRRKGGANMARLLVKKYRDDDPNNRRYYWWRMLTKQRLYKRSRDVLIQLKMSERHKALEDTVTNVEDGYEQLFGFFNEREERLRAQQEEAETSNNRDQRTKRKFTVEDEDDEDESAAAKRPKA.

Interaction with histone H4 N-terminus regions lie at residues 44-46 and 214-216; these read EEE and YRW. Acetyl-CoA-binding positions include 254–256 and 261–267; these read FLI and QGTGHGV. The active-site Proton donor/acceptor is Glu-289. A disordered region spans residues 456–496; the sequence is LRAQQEEAETSNNRDQRTKRKFTVEDEDDEDESAAAKRPKA.

The protein belongs to the HAT1 family. Component of the HAT-B complex composed of at least hat1 and hat2. The HAT-B complex binds to histone H4 tail.

The protein resides in the cytoplasm. Its subcellular location is the nucleus. It catalyses the reaction L-lysyl-[protein] + acetyl-CoA = N(6)-acetyl-L-lysyl-[protein] + CoA + H(+). Its function is as follows. Catalytic component of the histone acetylase B (HAT-B) complex. Acetylates 'Lys-12' of histone H4 which is required for telomeric silencing. Has intrinsic substrate specificity that modifies lysine in recognition sequence GXGKXG. Involved in DNA double-strand break repair. This is Histone acetyltransferase type B catalytic subunit (hat1) from Emericella nidulans (strain FGSC A4 / ATCC 38163 / CBS 112.46 / NRRL 194 / M139) (Aspergillus nidulans).